Here is a 391-residue protein sequence, read N- to C-terminus: Decapping nuclease RAI1 (391 aa).

Residue glutamate 174 coordinates a divalent metal cation. Glutamate 223 serves as a coordination point for substrate. Aspartate 225, glutamate 244, and leucine 245 together coordinate a divalent metal cation. Substrate contacts are provided by lysine 246 and glutamine 270.

It belongs to the DXO/Dom3Z family. Interacts with RAT1; the interaction is direct, stabilizes RAT1 protein structure and stimulates its exoribonuclease activity. The interaction also stimulates RAI1 pyrophosphohydrolase activity, probably by recruiting it to mRNA substrates. The cofactor is a divalent metal cation.

The protein localises to the nucleus. It carries out the reaction a 5'-end NAD(+)-phospho-ribonucleoside in mRNA + H2O = a 5'-end phospho-ribonucleoside in mRNA + NAD(+) + H(+). The catalysed reaction is a 5'-end (N(7)-methyl 5'-triphosphoguanosine)-ribonucleoside-ribonucleotide in mRNA + H2O = a (N(7)-methyl 5'-triphosphoguanosine)-nucleoside + a 5'-end phospho-ribonucleoside in mRNA + H(+). It catalyses the reaction a 5'-end triphospho-ribonucleoside in mRNA + H2O = a 5'-end phospho-ribonucleoside in mRNA + diphosphate + H(+). Its function is as follows. Decapping enzyme for NAD-capped RNAs: specifically hydrolyzes the nicotinamide adenine dinucleotide (NAD) cap from a subset of RNAs by removing the entire NAD moiety from the 5'-end of an NAD-capped RNA. The NAD-cap is present at the 5'-end of some RNAs and snoRNAs. In contrast to the canonical 5'-end N7 methylguanosine (m7G) cap, the NAD cap promotes mRNA decay. Also acts as a non-canonical decapping enzyme that removes the entire cap structure of m7G capped or incompletely capped RNAs. Has decapping activity toward incomplete 5'-end m7G cap mRNAs such as unmethylated 5'-end-capped RNA (cap0), while it has no activity toward 2'-O-ribose methylated m7G cap (cap1). Also possesses RNA 5'-pyrophosphohydrolase activity by hydrolyzing the 5'-end triphosphate to release pyrophosphates. Stimulates exoribonuclease activity of Rat1, allowing it to degrade RNAs with stable secondary structure more effectively. The chain is Decapping nuclease RAI1 from Candida albicans (strain SC5314 / ATCC MYA-2876) (Yeast).